Here is a 20-residue protein sequence, read N- to C-terminus: Pregnancy-associated glycoprotein 61C (20 aa).

The protein belongs to the peptidase A1 family. N-glycosylated. As to expression, expressed in chorionic epithelium (trophectoderm).

It is found in the secreted. Its subcellular location is the extracellular space. The protein is Pregnancy-associated glycoprotein 61C of Bubalus bubalis (Domestic water buffalo).